The chain runs to 76 residues: U-scoloptoxin(13)-Sa1a (76 aa).

The first 22 residues, 1–22 (MAYIFALIFAFVVCINTDVIQA), serve as a signal peptide directing secretion.

Belongs to the scoloptoxin-13 family. Post-translationally, contains 4 disulfide bonds. In terms of tissue distribution, expressed by the venom gland.

It is found in the secreted. The polypeptide is U-scoloptoxin(13)-Sa1a (Scolopendra alternans (Florida Keys giant centipede)).